Here is a 1372-residue protein sequence, read N- to C-terminus: Collagen alpha-2(I) chain (1372 aa).

A signal peptide spans 1–22 (MLSFVDTRTLLLLAVTSCLATC). A Pyrrolidone carboxylic acid modification is found at Q23. The propeptide at 23 to 85 (QSLQMGSVRK…PPGLTGNFAA (63 aa)) is N-terminal propeptide. A disordered region spans residues 28-1135 (GSVRKGPTGD…DQPRSQPSLR (1108 aa)). The span at 59–77 (VGPPGPPGAPGPPGPPGPP) shows a compositional bias: pro residues. Pyrrolidone carboxylic acid is present on Q86. Allysine is present on K90. A compositionally biased stretch (low complexity) spans 95–146 (GPGPMGLMGPRGPPGAVGAPGPQGFQGPAGEPGEPGQTGPAGSRGPAGPPGK). The segment covering 147–161 (AGEDGHPGKPGRPGE) has biased composition (basic and acidic residues). K183 carries the 5-hydroxylysine; alternate modification. O-linked (Gal...) hydroxylysine; alternate glycosylation is present at K183. 7 stretches are compositionally biased toward low complexity: residues 231–260 (VGAP…SAGP), 285–299 (AGPR…LSGP), 306–327 (PGAN…AGAP), 336–348 (PGPV…TGPR), 390–416 (PGEP…LPGA), 476–495 (LPGI…RGEA), and 519–537 (PGLA…NGAQ). A compositionally biased stretch (gly residues) spans 544 to 553 (GVQGGKGEQG). A compositionally biased stretch (low complexity) spans 600-639 (PGESGAAGPSGPIGIRGPSGAPGPDGNKGEAGAVGAPGSA). Residues 640-649 (GASGPGGLPG) show a composition bias toward gly residues. 2 stretches are compositionally biased toward low complexity: residues 674–716 (NPGR…PRGS) and 725–743 (PAGP…QPGA). Basic and acidic residues predominate over residues 744–753 (KGEKGTKGPK). Positions 755–771 (ENGIVGPTGPVGAAGPS) are enriched in low complexity. Positions 781 to 790 (GSRGDGGPPG) are enriched in gly residues. A Cell attachment site motif is present at residues 783-785 (RGD). The segment covering 792-801 (TGFPGAAGRT) has biased composition (low complexity). A Cell attachment site motif is present at residues 828-830 (RGD). Composition is skewed to low complexity over residues 855-882 (SGEP…LGLP), 891-927 (PGIA…NGAP), 957-978 (PGNI…VGPA), and 987-1007 (PGPA…PSGP). Positions 1011 to 1013 (RGD) match the Cell attachment site motif. Over residues 1011–1022 (RGDKGEPGDKGA) the composition is skewed to basic and acidic residues. Over residues 1095–1107 (AGPPGPPGPPGPP) the composition is skewed to pro residues. Gly residues predominate over residues 1108–1120 (GVSGGGYDFGFEG). Residues 1126-1372 (DQPRSQPSLR…RVEVGPVCFK (247 aa)) constitute a propeptide, C-terminal propeptide. The region spanning 1139-1372 (YEVDATLKSL…RVEVGPVCFK (234 aa)) is the Fibrillar collagen NC1 domain. 3 cysteine pairs are disulfide-bonded: C1169-C1201, C1209-C1370, and C1278-C1323. Positions 1187, 1189, 1190, 1192, and 1195 each coordinate Ca(2+). A glycan (N-linked (GlcNAc...) asparagine) is linked at N1273.

It belongs to the fibrillar collagen family. In terms of assembly, trimers of one alpha 2(I) and two alpha 1(I) chains. Interacts (via C-terminus) with TMEM131 (via PapD-L domain); the interaction is direct and is involved in assembly and TRAPPIII ER-to-Golgi transport complex-dependent secretion of collagen. In terms of processing, proline residues at the third position of the tripeptide repeating unit (G-X-P) are hydroxylated in some or all of the chains. Proline residues at the second position of the tripeptide repeating unit (G-P-X) are hydroxylated in some of the chains. In terms of tissue distribution, forms the fibrils of tendon, ligaments and bones. In bones the fibrils are mineralized with calcium hydroxyapatite. Expressed in flagella of epididymal sperm.

Its subcellular location is the secreted. It is found in the extracellular space. The protein localises to the extracellular matrix. Its function is as follows. Type I collagen is a member of group I collagen (fibrillar forming collagen). This Rattus norvegicus (Rat) protein is Collagen alpha-2(I) chain (Col1a2).